The following is an 842-amino-acid chain: Unconventional myosin-Ia (842 aa).

The 686-residue stretch at Gly-1 to Arg-686 folds into the Myosin motor domain. Position 93-100 (Gly-93–Thr-100) interacts with ATP. An actin-binding region spans residues Val-563–Asp-585. IQ domains follow at residues Leu-689–Met-712, Arg-713–Gly-733, and Ile-735–Arg-764.

The protein belongs to the TRAFAC class myosin-kinesin ATPase superfamily. Myosin family. Post-translationally, phosphorylated by ALPK1.

In terms of biological role, involved in directing the movement of organelles along actin filaments. In Rattus norvegicus (Rat), this protein is Unconventional myosin-Ia (Myo1a).